The chain runs to 379 residues: Queuine tRNA-ribosyltransferase (379 aa).

D94 serves as the catalytic Proton acceptor. Substrate contacts are provided by residues 94 to 98 (DSGGF), D148, Q191, and G218. Residues 249-255 (GVGSPDA) are RNA binding. The active-site Nucleophile is the D268. The interval 273-277 (TRIAR) is RNA binding; important for wobble base 34 recognition. Zn(2+)-binding residues include C306, C308, C311, and H337.

Belongs to the queuine tRNA-ribosyltransferase family. In terms of assembly, homodimer. Within each dimer, one monomer is responsible for RNA recognition and catalysis, while the other monomer binds to the replacement base PreQ1. Requires Zn(2+) as cofactor.

It carries out the reaction 7-aminomethyl-7-carbaguanine + guanosine(34) in tRNA = 7-aminomethyl-7-carbaguanosine(34) in tRNA + guanine. It functions in the pathway tRNA modification; tRNA-queuosine biosynthesis. In terms of biological role, catalyzes the base-exchange of a guanine (G) residue with the queuine precursor 7-aminomethyl-7-deazaguanine (PreQ1) at position 34 (anticodon wobble position) in tRNAs with GU(N) anticodons (tRNA-Asp, -Asn, -His and -Tyr). Catalysis occurs through a double-displacement mechanism. The nucleophile active site attacks the C1' of nucleotide 34 to detach the guanine base from the RNA, forming a covalent enzyme-RNA intermediate. The proton acceptor active site deprotonates the incoming PreQ1, allowing a nucleophilic attack on the C1' of the ribose to form the product. After dissociation, two additional enzymatic reactions on the tRNA convert PreQ1 to queuine (Q), resulting in the hypermodified nucleoside queuosine (7-(((4,5-cis-dihydroxy-2-cyclopenten-1-yl)amino)methyl)-7-deazaguanosine). This is Queuine tRNA-ribosyltransferase from Staphylococcus aureus (strain bovine RF122 / ET3-1).